The sequence spans 818 residues: Structure-specific endonuclease subunit SLX4 (818 aa).

5 disordered regions span residues 1 to 39 (MSFL…PSAS), 53 to 151 (RDPY…SSSN), 279 to 324 (FSEG…HQDS), 413 to 437 (NAQF…KTSK), and 587 to 712 (MLPA…MASE). Residues 28–39 (VIDSSPSVPSAS) are compositionally biased toward low complexity. Residues 90–103 (PSERTKDAHGKDRF) show a composition bias toward basic and acidic residues. The span at 306–316 (TTSTTITSLST) shows a compositional bias: low complexity. A compositionally biased stretch (polar residues) spans 426 to 437 (TRSPCSNPKTSK). Residues 604-618 (QMSKRDTIKSRDIRA) are compositionally biased toward basic and acidic residues. Polar residues-rich tracts occupy residues 621-640 (SRSN…QNTG), 652-672 (SSKS…TQSV), and 696-712 (SLAS…MASE).

Belongs to the SLX4 family. As to quaternary structure, forms a heterodimer with SLX1. Post-translationally, phosphorylated in response to DNA damage.

It localises to the nucleus. Its function is as follows. Regulatory subunit of the SLX1-SLX4 structure-specific endonuclease that resolves DNA secondary structures generated during DNA repair and recombination. Has endonuclease activity towards branched DNA substrates, introducing single-strand cuts in duplex DNA close to junctions with ss-DNA. This is Structure-specific endonuclease subunit SLX4 from Uncinocarpus reesii (strain UAMH 1704).